Here is a 127-residue protein sequence, read N- to C-terminus: Spore germination protein 1 (127 aa).

An N-terminal signal peptide occupies residues 1–25 (MNIKNSLILIISTIFVLSMINGGLT). 2 N-linked (GlcNAc...) asparagine glycosylation sites follow: Asn54 and Asn118.

The protein belongs to the Dictyostelium gerABC family.

The protein localises to the secreted. In Dictyostelium discoideum (Social amoeba), this protein is Spore germination protein 1 (gerA).